The sequence spans 186 residues: ATP-dependent protease subunit HslV (186 aa).

The active site involves Thr14. Na(+) contacts are provided by Ala168, Cys171, and Thr174.

It belongs to the peptidase T1B family. HslV subfamily. In terms of assembly, a double ring-shaped homohexamer of HslV is capped on each side by a ring-shaped HslU homohexamer. The assembly of the HslU/HslV complex is dependent on binding of ATP.

It is found in the cytoplasm. The catalysed reaction is ATP-dependent cleavage of peptide bonds with broad specificity.. Allosterically activated by HslU binding. Its function is as follows. Protease subunit of a proteasome-like degradation complex believed to be a general protein degrading machinery. This chain is ATP-dependent protease subunit HslV, found in Bradyrhizobium sp. (strain BTAi1 / ATCC BAA-1182).